Reading from the N-terminus, the 451-residue chain is Acetylornithine aminotransferase, mitochondrial (451 aa).

Residue lysine 302 is modified to N6-(pyridoxal phosphate)lysine.

It belongs to the class-III pyridoxal-phosphate-dependent aminotransferase family. It depends on pyridoxal 5'-phosphate as a cofactor. In terms of tissue distribution, found at highest levels in nodules, confined to the infected cells.

Its subcellular location is the mitochondrion. It carries out the reaction N(2)-acetyl-L-ornithine + 2-oxoglutarate = N-acetyl-L-glutamate 5-semialdehyde + L-glutamate. Its pathway is amino-acid biosynthesis; L-arginine biosynthesis; N(2)-acetyl-L-ornithine from L-glutamate: step 4/4. Its function is as follows. Involved in the biosynthesis of citrulline. This chain is Acetylornithine aminotransferase, mitochondrial (AG118), found in Alnus glutinosa (European alder).